A 705-amino-acid chain; its full sequence is Polyribonucleotide nucleotidyltransferase (705 aa).

D487 and D493 together coordinate Mg(2+). Positions 554–613 (PKILTMTINPDKIRDVIGPSGKQINKIIEETGVKIDIEQDGTIFISSTDESGNQKAKKII) constitute a KH domain. Residues 623-691 (GQLYLGKVKR…KQGRVNLSRK (69 aa)) enclose the S1 motif domain.

The protein belongs to the polyribonucleotide nucleotidyltransferase family. As to quaternary structure, homodimer. Component of a possible RNA degradosome complex composed of rny, rnjA, rnjB, pnp, pfkA and eno (although rnjA and rnjB's presence is unclear). RNA helicase CshA may also be a member of this complex. It depends on Mg(2+) as a cofactor.

It localises to the cytoplasm. It carries out the reaction RNA(n+1) + phosphate = RNA(n) + a ribonucleoside 5'-diphosphate. In terms of biological role, involved in mRNA degradation. Catalyzes the phosphorolysis of single-stranded polyribonucleotides processively in the 3'- to 5'-direction. Necessary for competence development in Bacillus subtilis. May be necessary for modification of the srfA transcript (stabilization or translation activation). Involved in processing precursor type I toxin-antitoxin RNAs antitoxin SR4 and SR5 RNAs to their mature forms. This Bacillus subtilis (strain 168) protein is Polyribonucleotide nucleotidyltransferase.